Consider the following 193-residue polypeptide: Leucyl/phenylalanyl-tRNA--protein transferase (193 aa).

Belongs to the L/F-transferase family.

It is found in the cytoplasm. It catalyses the reaction N-terminal L-lysyl-[protein] + L-leucyl-tRNA(Leu) = N-terminal L-leucyl-L-lysyl-[protein] + tRNA(Leu) + H(+). It carries out the reaction N-terminal L-arginyl-[protein] + L-leucyl-tRNA(Leu) = N-terminal L-leucyl-L-arginyl-[protein] + tRNA(Leu) + H(+). The enzyme catalyses L-phenylalanyl-tRNA(Phe) + an N-terminal L-alpha-aminoacyl-[protein] = an N-terminal L-phenylalanyl-L-alpha-aminoacyl-[protein] + tRNA(Phe). Functionally, functions in the N-end rule pathway of protein degradation where it conjugates Leu, Phe and, less efficiently, Met from aminoacyl-tRNAs to the N-termini of proteins containing an N-terminal arginine or lysine. In Akkermansia muciniphila (strain ATCC BAA-835 / DSM 22959 / JCM 33894 / BCRC 81048 / CCUG 64013 / CIP 107961 / Muc), this protein is Leucyl/phenylalanyl-tRNA--protein transferase.